The following is a 1186-amino-acid chain: Tricalbin-1 (1186 aa).

The segment at methionine 1–histidine 50 is disordered. Topologically, residues methionine 1–aspartate 106 are cytoplasmic. Positions aspartate 26–serine 39 are enriched in basic and acidic residues. A helical transmembrane segment spans residues tryptophan 107–tyrosine 127. Lysine 128 is a topological domain (extracellular). Residues phenylalanine 129 to alanine 149 form a helical membrane-spanning segment. At lysine 150–phenylalanine 1186 the chain is on the cytoplasmic side. The region spanning aspartate 172–proline 375 is the SMP-LTD domain. C2 domains lie at proline 366 to lysine 487, glutamate 512 to threonine 636, and arginine 640 to glutamate 757. Residues leucine 795–lysine 822 are a coiled coil. The 119-residue stretch at proline 976–valine 1094 folds into the C2 4 domain. Serine 1000 bears the Phosphoserine mark. Residues aspartate 1008, aspartate 1014, aspartate 1064, aspartate 1066, serine 1069, and aspartate 1072 each coordinate Ca(2+).

This sequence belongs to the tricalbin family. Interacts with TCB2 via its C-terminal domain. Ca(2+) serves as cofactor.

The protein localises to the cell membrane. The protein resides in the endoplasmic reticulum membrane. Functionally, may play a role in membrane trafficking. This is Tricalbin-1 (TCB1) from Saccharomyces cerevisiae (strain ATCC 204508 / S288c) (Baker's yeast).